Consider the following 253-residue polypeptide: 5'-nucleotidase SurE (253 aa).

Asp-8, Asp-9, Ser-40, and Asn-92 together coordinate a divalent metal cation.

It belongs to the SurE nucleotidase family. A divalent metal cation serves as cofactor.

It is found in the cytoplasm. It catalyses the reaction a ribonucleoside 5'-phosphate + H2O = a ribonucleoside + phosphate. Its function is as follows. Nucleotidase that shows phosphatase activity on nucleoside 5'-monophosphates. The polypeptide is 5'-nucleotidase SurE (Hyphomonas neptunium (strain ATCC 15444)).